Reading from the N-terminus, the 252-residue chain is uncharacterized protein (252 aa).

The HTH deoR-type domain maps to 3–58 (AKDRIQAIKQMVANDKKVTVSNLSGIFQVTEETIRRDLEKLEDEGFLTRTYGGAVL). The H-T-H motif DNA-binding region spans 20–39 (VTVSNLSGIFQVTEETIRRD).

This is an uncharacterized protein from Escherichia coli (strain K12).